The following is a 330-amino-acid chain: Glycerol-3-phosphate dehydrogenase [NAD(P)+] (330 aa).

Ser10, Trp11, Arg31, and Lys104 together coordinate NADPH. The sn-glycerol 3-phosphate site is built by Lys104, Gly131, and Ser133. Position 135 (Ala135) interacts with NADPH. Sn-glycerol 3-phosphate is bound by residues Lys186, Asp239, Ser249, Arg250, and Asn251. The active-site Proton acceptor is Lys186. Arg250 is a binding site for NADPH. NADPH contacts are provided by Val274 and Glu276.

It belongs to the NAD-dependent glycerol-3-phosphate dehydrogenase family.

The protein localises to the cytoplasm. The enzyme catalyses sn-glycerol 3-phosphate + NAD(+) = dihydroxyacetone phosphate + NADH + H(+). It carries out the reaction sn-glycerol 3-phosphate + NADP(+) = dihydroxyacetone phosphate + NADPH + H(+). Its pathway is membrane lipid metabolism; glycerophospholipid metabolism. Functionally, catalyzes the reduction of the glycolytic intermediate dihydroxyacetone phosphate (DHAP) to sn-glycerol 3-phosphate (G3P), the key precursor for phospholipid synthesis. In Thermoanaerobacter sp. (strain X514), this protein is Glycerol-3-phosphate dehydrogenase [NAD(P)+].